The sequence spans 25 residues: Glucomannokinase (25 aa).

Belongs to the ROK (NagC/XylR) family. Homodimer.

The catalysed reaction is D-glucose + ATP = D-glucose 6-phosphate + ADP + H(+). The enzyme catalyses D-mannose + ATP = D-mannose 6-phosphate + ADP + H(+). The protein operates within carbohydrate degradation; glycolysis; D-glyceraldehyde 3-phosphate and glycerone phosphate from D-glucose: step 1/4. Its pathway is carbohydrate metabolism; mannose metabolism. Its activity is regulated as follows. Competitively inhibited by 2-deoxy-glucose. The enzyme has great affinity for glucose and mannose. This Segatella bryantii (Prevotella bryantii) protein is Glucomannokinase.